Consider the following 456-residue polypeptide: Probable mannan endo-1,4-beta-mannosidase F (456 aa).

An N-terminal signal peptide occupies residues 1-18 (MRPLSSAALLSAIGAVAA). A CBM1 domain is found at 19-54 (QVGPWGQCGGQSYTGGTSCVSGWACVFLNDWYSQCQ). The interval 79 to 110 (STSVSATAPPSSTSSSTASVSSSTSSTPIPTS) is disordered. Residues 79–113 (STSVSATAPPSSTSSSTASVSSSTSSTPIPTSSGS) form a ser-rich linker region. The tract at residues 114-456 (FVKAEGLKFN…CAVIDHVSRI (343 aa)) is catalytic. Substrate is bound by residues tryptophan 166 and asparagine 280. Glutamate 281 functions as the Proton donor in the catalytic mechanism. Residue tyrosine 356 participates in substrate binding. Glutamate 390 functions as the Nucleophile in the catalytic mechanism. Tryptophan 420 serves as a coordination point for substrate.

This sequence belongs to the glycosyl hydrolase 5 (cellulase A) family.

It localises to the secreted. It catalyses the reaction Random hydrolysis of (1-&gt;4)-beta-D-mannosidic linkages in mannans, galactomannans and glucomannans.. Its function is as follows. Endo-1,4-mannanase, a crucial enzyme for depolymerization of seed galactomannans and wood galactoglucomannans. The sequence is that of Probable mannan endo-1,4-beta-mannosidase F (manF) from Neosartorya fischeri (strain ATCC 1020 / DSM 3700 / CBS 544.65 / FGSC A1164 / JCM 1740 / NRRL 181 / WB 181) (Aspergillus fischerianus).